The following is a 541-amino-acid chain: Propionate catabolism operon regulatory protein (541 aa).

A Sigma-54 factor interaction domain is found at 221 to 464 (IRGQSPQMEQ…RNMMERLALF (244 aa)). 321–330 (AHGGTLFLDE) contributes to the ATP binding site. The H-T-H motif DNA-binding region spans 513 to 532 (KTAAARYLGISRTTLWRRLK).

Involved in the transcriptional regulation of the propionate catabolism operon. This is Propionate catabolism operon regulatory protein (prpR) from Salmonella typhimurium (strain LT2 / SGSC1412 / ATCC 700720).